A 307-amino-acid chain; its full sequence is 4-hydroxy-3-methylbut-2-enyl diphosphate reductase (307 aa).

Cys-13 lines the [4Fe-4S] cluster pocket. Residues His-42 and His-75 each contribute to the (2E)-4-hydroxy-3-methylbut-2-enyl diphosphate site. Residues His-42 and His-75 each coordinate dimethylallyl diphosphate. 2 residues coordinate isopentenyl diphosphate: His-42 and His-75. A [4Fe-4S] cluster-binding site is contributed by Cys-97. Position 125 (His-125) interacts with (2E)-4-hydroxy-3-methylbut-2-enyl diphosphate. Residue His-125 participates in dimethylallyl diphosphate binding. His-125 contacts isopentenyl diphosphate. Catalysis depends on Glu-127, which acts as the Proton donor. Thr-165 is a (2E)-4-hydroxy-3-methylbut-2-enyl diphosphate binding site. Cys-195 contacts [4Fe-4S] cluster. Residues Ser-223, Ser-224, Asn-225, and Ser-267 each contribute to the (2E)-4-hydroxy-3-methylbut-2-enyl diphosphate site. Ser-223, Ser-224, Asn-225, and Ser-267 together coordinate dimethylallyl diphosphate. Residues Ser-223, Ser-224, Asn-225, and Ser-267 each contribute to the isopentenyl diphosphate site.

It belongs to the IspH family. The cofactor is [4Fe-4S] cluster.

It catalyses the reaction isopentenyl diphosphate + 2 oxidized [2Fe-2S]-[ferredoxin] + H2O = (2E)-4-hydroxy-3-methylbut-2-enyl diphosphate + 2 reduced [2Fe-2S]-[ferredoxin] + 2 H(+). The enzyme catalyses dimethylallyl diphosphate + 2 oxidized [2Fe-2S]-[ferredoxin] + H2O = (2E)-4-hydroxy-3-methylbut-2-enyl diphosphate + 2 reduced [2Fe-2S]-[ferredoxin] + 2 H(+). It functions in the pathway isoprenoid biosynthesis; dimethylallyl diphosphate biosynthesis; dimethylallyl diphosphate from (2E)-4-hydroxy-3-methylbutenyl diphosphate: step 1/1. The protein operates within isoprenoid biosynthesis; isopentenyl diphosphate biosynthesis via DXP pathway; isopentenyl diphosphate from 1-deoxy-D-xylulose 5-phosphate: step 6/6. Catalyzes the conversion of 1-hydroxy-2-methyl-2-(E)-butenyl 4-diphosphate (HMBPP) into a mixture of isopentenyl diphosphate (IPP) and dimethylallyl diphosphate (DMAPP). Acts in the terminal step of the DOXP/MEP pathway for isoprenoid precursor biosynthesis. This is 4-hydroxy-3-methylbut-2-enyl diphosphate reductase from Chlamydia trachomatis serovar A (strain ATCC VR-571B / DSM 19440 / HAR-13).